We begin with the raw amino-acid sequence, 194 residues long: Peptidyl-tRNA hydrolase (194 aa).

TRNA is bound at residue Tyr-17. The Proton acceptor role is filled by His-22. Residues Tyr-68, Asn-70, and Asn-116 each contribute to the tRNA site.

Belongs to the PTH family. Monomer.

The protein resides in the cytoplasm. The catalysed reaction is an N-acyl-L-alpha-aminoacyl-tRNA + H2O = an N-acyl-L-amino acid + a tRNA + H(+). In terms of biological role, hydrolyzes ribosome-free peptidyl-tRNAs (with 1 or more amino acids incorporated), which drop off the ribosome during protein synthesis, or as a result of ribosome stalling. Its function is as follows. Catalyzes the release of premature peptidyl moieties from peptidyl-tRNA molecules trapped in stalled 50S ribosomal subunits, and thus maintains levels of free tRNAs and 50S ribosomes. This is Peptidyl-tRNA hydrolase from Pseudomonas entomophila (strain L48).